We begin with the raw amino-acid sequence, 189 residues long: Molybdenum cofactor guanylyltransferase (189 aa).

GTP is bound by residues 10–12, Lys-23, Asn-51, Asp-69, and Asp-99; that span reads LAG. Residue Asp-99 coordinates Mg(2+).

This sequence belongs to the MobA family. Monomer. The cofactor is Mg(2+).

It localises to the cytoplasm. The catalysed reaction is Mo-molybdopterin + GTP + H(+) = Mo-molybdopterin guanine dinucleotide + diphosphate. Functionally, transfers a GMP moiety from GTP to Mo-molybdopterin (Mo-MPT) cofactor (Moco or molybdenum cofactor) to form Mo-molybdopterin guanine dinucleotide (Mo-MGD) cofactor. In Pasteurella multocida (strain Pm70), this protein is Molybdenum cofactor guanylyltransferase.